The following is a 316-amino-acid chain: Epoxide hydrolase 3 (316 aa).

Positions 25–302 (PVVLLLHGFP…ACHFINQERP (278 aa)) constitute an AB hydrolase-1 domain. Asp101 serves as the catalytic Nucleophile. Tyr150 provides a ligand contact to an epoxide. The active-site Proton donor is the Tyr230. His295 serves as the catalytic Proton acceptor.

It belongs to the AB hydrolase superfamily. Epoxide hydrolase family. In terms of assembly, homodimer. As to expression, highly expressed in young fruits 15 days after anthesis (15-DAA).

The enzyme catalyses an epoxide + H2O = an ethanediol. It carries out the reaction (24S)-24,25-epoxycucurbitadienol + H2O = (24R)-24,25-dihydroxycucurbitadienol. It functions in the pathway secondary metabolite biosynthesis; terpenoid biosynthesis. In terms of biological role, epoxide hydrolase involved in the biosynthesis of cucurbitacin and mogroside tetracyclic triterpene natural products (e.g. siamenoside I and mogrosides IV, V and VI). Cucurbitacins have cytotoxic properties and exhibit deterrent taste as a defense barrier against herbivores. Mogrosides are nonsugar highly oxygenated compounds used as high-intensity zero-calorie sweeteners; they also possess pharmacological properties such as regulating immunity, lowering blood sugar and lipid levels, protecting the liver, and acting as antioxidants and antitumor agents. Catalyzes the hydrolysis of aromatic epoxide-containing substrates, such as the conversion of 24,25-epoxycucurbitadienol to 24,25-dihydroxycucurbitadienol. This chain is Epoxide hydrolase 3, found in Siraitia grosvenorii (Monk's fruit).